We begin with the raw amino-acid sequence, 193 residues long: Peptidyl-tRNA hydrolase 1 (193 aa).

Tyr-27 is a tRNA binding site. His-32 serves as the catalytic Proton acceptor. The tRNA site is built by Phe-80, Asn-82, and Asn-128.

It belongs to the PTH family. As to quaternary structure, monomer.

The protein resides in the cytoplasm. The enzyme catalyses an N-acyl-L-alpha-aminoacyl-tRNA + H2O = an N-acyl-L-amino acid + a tRNA + H(+). Hydrolyzes ribosome-free peptidyl-tRNAs (with 1 or more amino acids incorporated), which drop off the ribosome during protein synthesis, or as a result of ribosome stalling. In terms of biological role, catalyzes the release of premature peptidyl moieties from peptidyl-tRNA molecules trapped in stalled 50S ribosomal subunits, and thus maintains levels of free tRNAs and 50S ribosomes. This chain is Peptidyl-tRNA hydrolase 1, found in Corynebacterium jeikeium (strain K411).